The chain runs to 492 residues: Cell division protein FtsA (492 aa).

Disordered stretches follow at residues 288–307 (GEETPSQNVQIPTTGSDGHE) and 429–458 (YTRTAHQSSPTPHIHSSPTERNLSDLKAPS). Residues 291 to 303 (TPSQNVQIPTTGS) show a composition bias toward polar residues. Residues 436-447 (SSPTPHIHSSPT) are compositionally biased toward low complexity.

The protein belongs to the FtsA/MreB family. Self-interacts. Interacts with FtsZ.

The protein localises to the cell inner membrane. Functionally, cell division protein that is involved in the assembly of the Z ring. May serve as a membrane anchor for the Z ring. This Helicobacter pylori (strain ATCC 700392 / 26695) (Campylobacter pylori) protein is Cell division protein FtsA.